The following is a 447-amino-acid chain: tRNA (guanine(37)-N(1))-methyltransferase (447 aa).

S-adenosyl-L-methionine contacts are provided by residues His-241, 285 to 286 (DL), and 313 to 314 (DV).

Belongs to the class I-like SAM-binding methyltransferase superfamily. TRM5/TYW2 family. Monomer.

The protein localises to the mitochondrion matrix. It is found in the nucleus. It localises to the cytoplasm. It catalyses the reaction guanosine(37) in tRNA + S-adenosyl-L-methionine = N(1)-methylguanosine(37) in tRNA + S-adenosyl-L-homocysteine + H(+). Specifically methylates the N1 position of guanosine-37 in various cytoplasmic and mitochondrial tRNAs. Methylation is not dependent on the nature of the nucleoside 5' of the target nucleoside. This is the first step in the biosynthesis of wybutosine (yW), a modified base adjacent to the anticodon of tRNAs and required for accurate decoding. This chain is tRNA (guanine(37)-N(1))-methyltransferase, found in Giardia intestinalis (strain ATCC 50803 / WB clone C6) (Giardia lamblia).